We begin with the raw amino-acid sequence, 316 residues long: tRNA dimethylallyltransferase (316 aa).

17 to 24 (GPTASGKT) lines the ATP pocket. 19 to 24 (TASGKT) provides a ligand contact to substrate. 4 interaction with substrate tRNA regions span residues 42–45 (DSAL), 166–170 (QRLSR), 247–252 (RCVGYR), and 280–287 (KRQITWLR).

Belongs to the IPP transferase family. Monomer. Mg(2+) serves as cofactor.

The enzyme catalyses adenosine(37) in tRNA + dimethylallyl diphosphate = N(6)-dimethylallyladenosine(37) in tRNA + diphosphate. In terms of biological role, catalyzes the transfer of a dimethylallyl group onto the adenine at position 37 in tRNAs that read codons beginning with uridine, leading to the formation of N6-(dimethylallyl)adenosine (i(6)A). In Escherichia coli O45:K1 (strain S88 / ExPEC), this protein is tRNA dimethylallyltransferase.